The chain runs to 251 residues: Flap endonuclease Xni (251 aa).

Aspartate 104 contributes to the Mg(2+) binding site. The region spanning 160–249 (VLPQQLPDYW…IDGNLQQLRL (90 aa)) is the 5'-3' exonuclease domain. K(+) contacts are provided by leucine 171, alanine 172, proline 180, valine 182, and isoleucine 185. Residues 184–189 (GIGPKS) form an interaction with DNA region.

It belongs to the Xni family. Mg(2+) serves as cofactor. It depends on K(+) as a cofactor.

Its function is as follows. Has flap endonuclease activity. During DNA replication, flap endonucleases cleave the 5'-overhanging flap structure that is generated by displacement synthesis when DNA polymerase encounters the 5'-end of a downstream Okazaki fragment. In Citrobacter koseri (strain ATCC BAA-895 / CDC 4225-83 / SGSC4696), this protein is Flap endonuclease Xni.